Consider the following 580-residue polypeptide: Cyclin-K (580 aa).

Residues lysine 262–arginine 580 are disordered. Composition is skewed to low complexity over residues glutamine 263–proline 277 and valine 285–lysine 321. Residues serine 324, serine 328, serine 329, and serine 340 each carry the phosphoserine modification. Residues proline 377–glutamate 386 show a composition bias toward low complexity. Residues glutamine 400 to serine 426 show a composition bias toward pro residues. Over residues serine 427–tyrosine 444 the composition is skewed to low complexity. Positions valine 477–proline 568 are enriched in pro residues.

The protein belongs to the cyclin family. Cyclin C subfamily. As to quaternary structure, regulatory subunit of cyclin-dependent kinases. Identified in a complex with a kinase and the RNA polymerase II holoenzyme. Interacts with POLR2A. Interacts with CDK12 and CDK13. Interacts with CDK9 according to PubMed:10574912; does not interact with CDK9 according to PubMed:22012619. In terms of assembly, (Microbial infection) Interacts with human herpes virus 1 (HHV-1) transcriptional regulator ICP22. Widely expressed. Highest levels in testis.

The protein resides in the nucleus. Functionally, regulatory subunit of cyclin-dependent kinases that mediates activation of target kinases. Plays a role in transcriptional regulation via its role in regulating the phosphorylation of the C-terminal domain (CTD) of the large subunit of RNA polymerase II (POLR2A). This Homo sapiens (Human) protein is Cyclin-K (CCNK).